The following is an 860-amino-acid chain: Leucine--tRNA ligase (860 aa).

The 'HIGH' region motif lies at 42 to 52; the sequence is PYPSGRLHMGH. Residues 619–623 carry the 'KMSKS' region motif; the sequence is KMSKS. Lys-622 contributes to the ATP binding site.

It belongs to the class-I aminoacyl-tRNA synthetase family.

It is found in the cytoplasm. It carries out the reaction tRNA(Leu) + L-leucine + ATP = L-leucyl-tRNA(Leu) + AMP + diphosphate. The chain is Leucine--tRNA ligase from Escherichia coli (strain ATCC 8739 / DSM 1576 / NBRC 3972 / NCIMB 8545 / WDCM 00012 / Crooks).